The sequence spans 797 residues: Protocadherin beta-9 (797 aa).

A signal peptide spans 1-26; the sequence is MKTRGFSFPRQRQVLFLFLFWGVSLA. The Extracellular portion of the chain corresponds to 27–690; sequence GSGFGRYSVT…AQADLLTVYL (664 aa). Cadherin domains follow at residues 35-133, 138-242, 247-347, 352-451, and 456-561; these read VTEE…SPVF, MVLK…VPQF, YETQ…PPEL, LSNS…APAF, and YTLF…SPFV. The N-linked (GlcNAc...) asparagine glycan is linked to Asn-169. Asn-418 carries N-linked (GlcNAc...) asparagine glycosylation. Asn-567 is a glycosylation site (N-linked (GlcNAc...) asparagine). The Cadherin 6 domain occupies 568-671; the sequence is GSAPCTELVP…LVDGFSQPYL (104 aa). The helical transmembrane segment at 691–711 threads the bilayer; that stretch reads VVALASVSSLFLLSVLLFVAV. Residues 712–797 are Cytoplasmic-facing; that stretch reads RLCRRSRAAS…TLPNSFGFNY (86 aa). The segment at 777 to 797 is disordered; the sequence is HRGGKEIEENSTLPNSFGFNY. Positions 786 to 797 are enriched in polar residues; sequence NSTLPNSFGFNY.

It is found in the cell membrane. Its function is as follows. Potential calcium-dependent cell-adhesion protein. May be involved in the establishment and maintenance of specific neuronal connections in the brain. This Homo sapiens (Human) protein is Protocadherin beta-9 (PCDHB9).